The sequence spans 654 residues: DNA-directed RNA polymerase III subunit RPC3 (654 aa).

The residue at position 27 (T27) is a Phosphothreonine. Disordered regions lie at residues 381–401 and 422–448; these read LSRK…ASLP and KSLQ…EDPH. Phosphoserine occurs at positions 392 and 394. Residues 429-444 show a composition bias toward acidic residues; it reads DTQEEDEEEEDLDADT. Residues 581–602 form a leucine-zipper region; the sequence is LEWNMANLLFKKEKLKQENSTL.

Belongs to the eukaryotic RPC3/POLR3C RNA polymerase subunit family. As to quaternary structure, component of the RNA polymerase III (Pol III) complex consisting of 17 subunits.

It localises to the cytoplasm. It is found in the nucleus. DNA-dependent RNA polymerase catalyzes the transcription of DNA into RNA using the four ribonucleoside triphosphates as substrates. Specific core component of RNA polymerase III which synthesizes small RNAs, such as 5S rRNA and tRNAs. The sequence is that of DNA-directed RNA polymerase III subunit RPC3 (RPC82) from Saccharomyces cerevisiae (strain ATCC 204508 / S288c) (Baker's yeast).